We begin with the raw amino-acid sequence, 146 residues long: Ribosome maturation factor RimP (146 aa).

This sequence belongs to the RimP family.

It is found in the cytoplasm. Required for maturation of 30S ribosomal subunits. The polypeptide is Ribosome maturation factor RimP (Helicobacter pylori (strain HPAG1)).